Here is a 332-residue protein sequence, read N- to C-terminus: DNA-directed RNA polymerase subunit alpha (332 aa).

The interval 1–234 (MTVTANQVLR…DQLSVFGDFT (234 aa)) is alpha N-terminal domain (alpha-NTD). Residues 248–332 (VDPVLLRPID…AGVASHGMLG (85 aa)) are alpha C-terminal domain (alpha-CTD).

Belongs to the RNA polymerase alpha chain family. As to quaternary structure, homodimer. The RNAP catalytic core consists of 2 alpha, 1 beta, 1 beta' and 1 omega subunit. When a sigma factor is associated with the core the holoenzyme is formed, which can initiate transcription.

It carries out the reaction RNA(n) + a ribonucleoside 5'-triphosphate = RNA(n+1) + diphosphate. In terms of biological role, DNA-dependent RNA polymerase catalyzes the transcription of DNA into RNA using the four ribonucleoside triphosphates as substrates. This Stenotrophomonas maltophilia (strain R551-3) protein is DNA-directed RNA polymerase subunit alpha.